We begin with the raw amino-acid sequence, 268 residues long: Protein atz-1 (268 aa).

Positions 171–243 (VDDANKLTEV…EEGEEDYEEE (73 aa)) form a coiled coil. The disordered stretch occupies residues 229–268 (DLMKEEEGEEDYEEEENYEVEEDFEDEEEYDEEGEEEDYE). Over residues 231–268 (MKEEEGEEDYEEEENYEVEEDFEDEEEYDEEGEEEDYE) the composition is skewed to acidic residues.

The protein localises to the nucleus. Plays a role in meiosis, germline development and oocyte morphogenesis. May play a role in DNA replication. In the germline, involved in the maintenance of transition zone nuclei and in chromosome structure and organization, but not required for mitotic proliferation. In Caenorhabditis elegans, this protein is Protein atz-1.